We begin with the raw amino-acid sequence, 251 residues long: Coenzyme F420:L-glutamate ligase (251 aa).

GTP contacts are provided by residues 9–12 (LPEI), 38–39 (ST), and Lys-43. An a divalent metal cation-binding site is contributed by Asp-113. Asn-116 serves as a coordination point for GTP. Residues Asp-149, Thr-150, and Glu-207 each coordinate a divalent metal cation. 205–212 (AGEGDGGT) provides a ligand contact to GTP.

The protein belongs to the CofE family. As to quaternary structure, homodimer. It depends on Mg(2+) as a cofactor. Requires Mn(2+) as cofactor. K(+) serves as cofactor.

The enzyme catalyses oxidized coenzyme F420-0 + GTP + L-glutamate = oxidized coenzyme F420-1 + GDP + phosphate + H(+). It catalyses the reaction oxidized coenzyme F420-1 + GTP + L-glutamate = oxidized coenzyme F420-2 + GDP + phosphate + H(+). It participates in cofactor biosynthesis; coenzyme F420 biosynthesis. Functionally, catalyzes the GTP-dependent successive addition of two or more gamma-linked L-glutamates to the L-lactyl phosphodiester of 7,8-didemethyl-8-hydroxy-5-deazariboflavin (F420-0) to form coenzyme F420-0-glutamyl-glutamate (F420-2) or polyglutamated F420 derivatives. This chain is Coenzyme F420:L-glutamate ligase, found in Halorubrum lacusprofundi (strain ATCC 49239 / DSM 5036 / JCM 8891 / ACAM 34).